The following is a 633-amino-acid chain: DNA-directed RNA polymerase subunit beta' (633 aa).

Zn(2+)-binding residues include Cys-72, Cys-74, Cys-87, and Cys-90. Mg(2+)-binding residues include Asp-468, Asp-470, and Asp-472.

This sequence belongs to the RNA polymerase beta' chain family. RpoC1 subfamily. As to quaternary structure, in plastids the minimal PEP RNA polymerase catalytic core is composed of four subunits: alpha, beta, beta', and beta''. When a (nuclear-encoded) sigma factor is associated with the core the holoenzyme is formed, which can initiate transcription. Mg(2+) is required as a cofactor. The cofactor is Zn(2+).

It localises to the plastid. Its subcellular location is the chloroplast. The catalysed reaction is RNA(n) + a ribonucleoside 5'-triphosphate = RNA(n+1) + diphosphate. Functionally, DNA-dependent RNA polymerase catalyzes the transcription of DNA into RNA using the four ribonucleoside triphosphates as substrates. This is DNA-directed RNA polymerase subunit beta' from Cyanidium caldarium (Red alga).